The chain runs to 24 residues: Waglerin-4 (24 aa).

C11 and C15 are disulfide-bonded.

The protein belongs to the waglerin family. In terms of assembly, monomer. In terms of tissue distribution, expressed by the venom gland.

It localises to the secreted. In terms of biological role, waglerin-2 selectively blocks the epsilon subunit of muscle nicotinic acetylcholine receptor (nAChR). Also has effects on rodent ionotropic GABA(A) receptors (GABR), since it potentiates I(GABA) in some neurons and depresses I(GABA) in others. In mice, it elicits tachypnea, ocular proptosis, rapid collapse and spasms, whereas no toxic effects on respiration and blood pressure are observed in rats. Functionally, waglerin-4 selectively blocks the epsilon subunit of muscle nicotinic acetylcholine receptor. It elicits tachypnea, ocular proptosis, rapid collapse and spasms in mice. It causes death by respiratory failure. This Tropidolaemus wagleri (Wagler's pit viper) protein is Waglerin-4.